The primary structure comprises 71 residues: MPIIKVRENESFDVALRRFKRSCEKSGILSEVRRREFYEKPTTERKRAKASAIKRHIKKLSRENLRRIRLY.

Belongs to the bacterial ribosomal protein bS21 family.

This chain is Small ribosomal subunit protein bS21, found in Blochmanniella pennsylvanica (strain BPEN).